A 233-amino-acid polypeptide reads, in one-letter code: Transcriptional regulatory protein PrrA (233 aa).

The region spanning arginine 9–leucine 123 is the Response regulatory domain. Aspartate 58 carries the 4-aspartylphosphate modification. Positions serine 134–methionine 232 form a DNA-binding region, ompR/PhoB-type.

Phosphorylated by PrrB at Asp-58.

Its subcellular location is the cytoplasm. Functionally, member of the two-component regulatory system PrrB/PrrA that is involved specifically in early intracellular multiplication of Mycobacterium and is essential for its viability. Upon phosphorylation by PrrB, functions as a transcription regulator by direct binding to promoter regions of target genes to positively regulate their expression. Autoregulates its own expression. In Mycobacterium bovis (strain ATCC BAA-935 / AF2122/97), this protein is Transcriptional regulatory protein PrrA (prrA).